The primary structure comprises 198 residues: MTLRCLESSGNGAEGAQSQWGTAGSAEEPSPEAARLAKALRELSHTGWYWGSMTVNEAKEKLKEAPEGTFLIRDSSHSDYLLTISVKTSAGPTNLRIEYQDGKFRLDSIICVKSKLKQFDSVVHLIDYYVQMCKDKRTGPEAPRNGTVHLYLTKPLYTSAPPLQHLCRLTINKCTSTVWGLPLPTRLKDYLEEYKFQV.

Residues Met-1–Ser-75 form an interaction with AREL1 region. The tract at residues Leu-6–Ser-30 is disordered. Polar residues predominate over residues Ser-8–Thr-22. A phosphoserine mark is found at Ser-30 and Ser-52. The region spanning Trp-48–Leu-156 is the SH2 domain. An SOCS box domain is found at Tyr-151–Gln-197. A Glycyl lysine isopeptide (Lys-Gly) (interchain with G-Cter in ubiquitin) cross-link involves residue Lys-173.

As to quaternary structure, substrate-recognition component of the ECS(SOCS2) complex, composed of SOCS2, CUL5, ELOB, ELOC and RNF7/RBX2. Interacts with IGF1R. Interacts with DCUN1D1. Post-translationally, ubiquitinated; mediated by AREL1 and leading to its subsequent proteasomal degradation. Ubiquitination is dependent on its phosphorylation at Ser-52, by PKC. Ubiquitination is stimulated by LPS. In terms of processing, phosphorylation at Ser-52 by PKC facilitates its ubiquitination and proteasomal degradation.

It is found in the cytoplasm. Its pathway is protein modification; protein ubiquitination. Functionally, substrate-recognition component of a cullin-5-RING E3 ubiquitin-protein ligase complex (ECS complex, also named CRL5 complex), which mediates the ubiquitination and subsequent proteasomal degradation of target proteins, such as EPOR and GHR. Specifically recognizes and binds phosphorylated proteins via its SH2 domain, promoting their ubiquitination. The ECS(SOCS2) complex acts as a key regulator of growth hormone receptor (GHR) levels by mediating ubiquitination and degradation of GHR, following GHR phosphorylation by JAK2. The ECS(SOCS2) also catalyzes ubiquitination and degradation of JAK2-phosphorylated EPOR. The protein is Suppressor of cytokine signaling 2 (SOCS2) of Bos taurus (Bovine).